Here is a 450-residue protein sequence, read N- to C-terminus: Chromosomal replication initiator protein DnaA 2 (450 aa).

The domain I, interacts with DnaA modulators stretch occupies residues 1-87; the sequence is MLTCNECTTW…LEFVVAEHKK (87 aa). The segment at 87-114 is domain II; the sequence is KPSAPVASQKESNEGISEVFEETKDFEL. The domain III, AAA+ region stretch occupies residues 115 to 330; sequence KLNLSYRFDN…GAINKLTAYC (216 aa). Positions 159, 161, 162, and 163 each coordinate ATP. Residues 331 to 450 are domain IV, binds dsDNA; that stretch reads RLFGKSLTET…VNLCKNHIVG (120 aa).

Belongs to the DnaA family. Oligomerizes as a right-handed, spiral filament on DNA at oriC.

Its subcellular location is the cytoplasm. Plays an essential role in the initiation and regulation of chromosomal replication. ATP-DnaA binds to the origin of replication (oriC) to initiate formation of the DNA replication initiation complex once per cell cycle. Binds the DnaA box (a 9 base pair repeat at the origin) and separates the double-stranded (ds)DNA. Forms a right-handed helical filament on oriC DNA; dsDNA binds to the exterior of the filament while single-stranded (ss)DNA is stabiized in the filament's interior. The ATP-DnaA-oriC complex binds and stabilizes one strand of the AT-rich DNA unwinding element (DUE), permitting loading of DNA polymerase. After initiation quickly degrades to an ADP-DnaA complex that is not apt for DNA replication. Binds acidic phospholipids. The sequence is that of Chromosomal replication initiator protein DnaA 2 from Chlamydia pneumoniae (Chlamydophila pneumoniae).